We begin with the raw amino-acid sequence, 400 residues long: Pectinesterase B (400 aa).

Substrate is bound by residues Thr171 and Gln205. The active-site Proton donor is the Asp228. Asp261 acts as the Nucleophile in catalysis. Substrate-binding residues include Arg325 and Trp327.

It belongs to the pectinesterase family.

It catalyses the reaction [(1-&gt;4)-alpha-D-galacturonosyl methyl ester](n) + n H2O = [(1-&gt;4)-alpha-D-galacturonosyl](n) + n methanol + n H(+). The protein operates within glycan metabolism; pectin degradation; 2-dehydro-3-deoxy-D-gluconate from pectin: step 1/5. This is Pectinesterase B (pemB) from Pectobacterium parmentieri.